The sequence spans 361 residues: Hydroxymethylglutaryl-CoA synthase (361 aa).

E92 (proton donor/acceptor) is an active-site residue. C124 functions as the Acyl-thioester intermediate in the catalytic mechanism. Positions 124, 165, 214, and 247 each coordinate (3S)-3-hydroxy-3-methylglutaryl-CoA. Residue H247 is the Proton donor/acceptor of the active site. K252 provides a ligand contact to CoA. 3 residues coordinate (3S)-3-hydroxy-3-methylglutaryl-CoA: K256, N279, and S309.

Belongs to the thiolase-like superfamily. Archaeal HMG-CoA synthase family. As to quaternary structure, interacts with acetoacetyl-CoA thiolase that catalyzes the precedent step in the pathway and with a DUF35 protein. The acetoacetyl-CoA thiolase/HMG-CoA synthase complex channels the intermediate via a fused CoA-binding site, which allows for efficient coupling of the endergonic thiolase reaction with the exergonic HMGCS reaction.

The enzyme catalyses acetoacetyl-CoA + acetyl-CoA + H2O = (3S)-3-hydroxy-3-methylglutaryl-CoA + CoA + H(+). It functions in the pathway metabolic intermediate biosynthesis; (R)-mevalonate biosynthesis; (R)-mevalonate from acetyl-CoA: step 2/3. Functionally, catalyzes the condensation of acetyl-CoA with acetoacetyl-CoA to form 3-hydroxy-3-methylglutaryl-CoA (HMG-CoA). Functions in the mevalonate (MVA) pathway leading to isopentenyl diphosphate (IPP), a key precursor for the biosynthesis of isoprenoid compounds that are building blocks of archaeal membrane lipids. This is Hydroxymethylglutaryl-CoA synthase from Aeropyrum pernix (strain ATCC 700893 / DSM 11879 / JCM 9820 / NBRC 100138 / K1).